The primary structure comprises 245 residues: Protein-glutamine gamma-glutamyltransferase (245 aa).

It belongs to the bacillus TGase family.

It carries out the reaction L-glutaminyl-[protein] + L-lysyl-[protein] = [protein]-L-lysyl-N(6)-5-L-glutamyl-[protein] + NH4(+). Functionally, probably plays a role in the assembly of the spore coat proteins by catalyzing epsilon-(gamma-glutamyl)lysine cross-links. In wild-type spores at 37 degrees Celsius, tgl mediates the cross-linking of GerQ in higher molecular mass forms, probably in cooperation with YabG. The chain is Protein-glutamine gamma-glutamyltransferase (tgl) from Bacillus subtilis (strain 168).